The primary structure comprises 481 residues: 6-phosphogluconate dehydrogenase, decarboxylating (481 aa).

Residues 11 to 16 (GLAVMG), 34 to 36 (NRT), 76 to 78 (VKA), and Asn-104 each bind NADP(+). Substrate-binding positions include Asn-104 and 130–132 (SGG). The active-site Proton acceptor is the Lys-184. 187–188 (HN) serves as a coordination point for substrate. Residue Glu-191 is the Proton donor of the active site. Substrate is bound by residues Tyr-192, Lys-259, Arg-286, Arg-445, and His-451.

It belongs to the 6-phosphogluconate dehydrogenase family. In terms of assembly, homodimer.

The catalysed reaction is 6-phospho-D-gluconate + NADP(+) = D-ribulose 5-phosphate + CO2 + NADPH. It participates in carbohydrate degradation; pentose phosphate pathway; D-ribulose 5-phosphate from D-glucose 6-phosphate (oxidative stage): step 3/3. Catalyzes the oxidative decarboxylation of 6-phosphogluconate to ribulose 5-phosphate and CO(2), with concomitant reduction of NADP to NADPH. The sequence is that of 6-phosphogluconate dehydrogenase, decarboxylating (Pgd) from Ceratitis capitata (Mediterranean fruit fly).